The chain runs to 187 residues: UPF0301 protein Sputcn32_2681 (187 aa).

This sequence belongs to the UPF0301 (AlgH) family.

The polypeptide is UPF0301 protein Sputcn32_2681 (Shewanella putrefaciens (strain CN-32 / ATCC BAA-453)).